Consider the following 261-residue polypeptide: Glucosamine-6-phosphate deaminase (261 aa).

D67 serves as the catalytic Proton acceptor; for enolization step. D136 acts as the For ring-opening step in catalysis. Catalysis depends on H138, which acts as the Proton acceptor; for ring-opening step. Residue E143 is the For ring-opening step of the active site.

The protein belongs to the glucosamine/galactosamine-6-phosphate isomerase family. NagB subfamily.

The catalysed reaction is alpha-D-glucosamine 6-phosphate + H2O = beta-D-fructose 6-phosphate + NH4(+). It participates in amino-sugar metabolism; N-acetylneuraminate degradation; D-fructose 6-phosphate from N-acetylneuraminate: step 5/5. In terms of biological role, catalyzes the reversible isomerization-deamination of glucosamine 6-phosphate (GlcN6P) to form fructose 6-phosphate (Fru6P) and ammonium ion. The sequence is that of Glucosamine-6-phosphate deaminase from Streptomyces avermitilis (strain ATCC 31267 / DSM 46492 / JCM 5070 / NBRC 14893 / NCIMB 12804 / NRRL 8165 / MA-4680).